The following is a 1047-amino-acid chain: Isoleucine--tRNA ligase (1047 aa).

The short motif at 52 to 62 is the 'HIGH' region element; it reads PTANGMPGAHH. Positions 600–604 match the 'KMSKS' region motif; the sequence is KMSKH. An ATP-binding site is contributed by lysine 603.

This sequence belongs to the class-I aminoacyl-tRNA synthetase family. IleS type 2 subfamily. Monomer. Zn(2+) serves as cofactor.

It localises to the cytoplasm. The enzyme catalyses tRNA(Ile) + L-isoleucine + ATP = L-isoleucyl-tRNA(Ile) + AMP + diphosphate. Functionally, catalyzes the attachment of isoleucine to tRNA(Ile). As IleRS can inadvertently accommodate and process structurally similar amino acids such as valine, to avoid such errors it has two additional distinct tRNA(Ile)-dependent editing activities. One activity is designated as 'pretransfer' editing and involves the hydrolysis of activated Val-AMP. The other activity is designated 'posttransfer' editing and involves deacylation of mischarged Val-tRNA(Ile). This Streptomyces avermitilis (strain ATCC 31267 / DSM 46492 / JCM 5070 / NBRC 14893 / NCIMB 12804 / NRRL 8165 / MA-4680) protein is Isoleucine--tRNA ligase.